We begin with the raw amino-acid sequence, 476 residues long: Glucose-1-phosphate adenylyltransferase (476 aa).

Residues Tyr114, Gly179, Glu194–Lys195, and Ser212 contribute to the alpha-D-glucose 1-phosphate site.

Belongs to the bacterial/plant glucose-1-phosphate adenylyltransferase family. As to quaternary structure, homotetramer.

It catalyses the reaction alpha-D-glucose 1-phosphate + ATP + H(+) = ADP-alpha-D-glucose + diphosphate. The protein operates within glycan biosynthesis; glycogen biosynthesis. Its function is as follows. Involved in the biosynthesis of ADP-glucose, a building block required for the elongation reactions to produce glycogen. Catalyzes the reaction between ATP and alpha-D-glucose 1-phosphate (G1P) to produce pyrophosphate and ADP-Glc. This is Glucose-1-phosphate adenylyltransferase from Yersinia pestis bv. Antiqua (strain Antiqua).